The following is a 31-amino-acid chain: Cytochrome b6-f complex subunit 6 (31 aa).

The chain crosses the membrane as a helical span at residues 4–24 (ITSYFGFLLAVLTITSALFIG).

Belongs to the PetL family. In terms of assembly, the 4 large subunits of the cytochrome b6-f complex are cytochrome b6, subunit IV (17 kDa polypeptide, PetD), cytochrome f and the Rieske protein, while the 4 small subunits are PetG, PetL, PetM and PetN. The complex functions as a dimer.

It is found in the plastid. The protein resides in the chloroplast thylakoid membrane. Functionally, component of the cytochrome b6-f complex, which mediates electron transfer between photosystem II (PSII) and photosystem I (PSI), cyclic electron flow around PSI, and state transitions. PetL is important for photoautotrophic growth as well as for electron transfer efficiency and stability of the cytochrome b6-f complex. This is Cytochrome b6-f complex subunit 6 from Cucumis sativus (Cucumber).